The chain runs to 827 residues: MDNQNNNNALANGDSQFTMPKVIDYLQNEWLKFEVDRAHWISEKAELTNRILKLESERKLFESHKFDLCRRVKMLEYALQQERLKNNSLLQQQQKVIEKVEEEEEEDDKIPKNREPPKKSKDNTTRLIIRKYLREMGYNDLIVSKSLQTEFENDSQNIDNDTTNTIDDTNDTTVKTILNLKDINNNNSNNNNKNQTTTTTTTSPSPSPSPSTSTSTSTSSNKTDNTTTTTTNGNGYNSNTIISPPSSSSSSSSSSSSSSSQSQPQPQLQSSLSELINNTTDLSQSLDSLSSASSGYEYDSLLDNLKQLDNSSVSSNSGNNSINSSSDSLDTSKQSQEDPNNVTISKQQQQEQQQQQESDEQSFNSFNEDIFNKLTANSKGRMKIKGLGNLKNYKKEHMGEEGNLSLPDQNTEEKSTPTTKSSSSSSSSSTGSTRKKKSSSSSSSGSSSSNSNTMNSELMGLGASDLNDITLDDGSKGGNDSAAPRVWKFKHSLKSHFDGVRSIQFHPNEPIMISASEDNSIKVWNLNHLVPTKKSPSPEIEPLYTIRGHTGPVFTSEWNQINGEYSNYQSFFSAGYDMIIRQWSLPSSDIDSYLQHGKILPYLEKEFIGGHQDGIWDLLSIPNTPNLLSSSADGTVSLWNTTTSEQLYTLQHSNGLSYIPTSIALPATENNRKLLTSYNDGSILLFDLETQQIISQLKQGSSNNNNNNNNNSQINKIVSHPFMPLAMTGSEDHKIEFFDLNSNTVVHSMIAHSNSISSLTIDPSGLYIASCAHDSSIRFWDISSKTCIQDLNSHRPKYDESIHCIKYHPNKGYFASGGADSVIRILN.

Positions 37–109 (RAHWISEKAE…VEEEEEEDDK (73 aa)) form a coiled coil. Disordered regions lie at residues 99–123 (KVEE…SKDN), 181–270 (KDIN…QLQS), 311–362 (SSVS…DEQS), and 400–459 (EEGN…SELM). Basic and acidic residues predominate over residues 109-123 (KIPKNREPPKKSKDN). Composition is skewed to low complexity over residues 184-270 (NNNN…QLQS) and 311-334 (SSVS…TSKQ). Over residues 337–346 (EDPNNVTISK) the composition is skewed to polar residues. Low complexity-rich tracts occupy residues 347–356 (QQQQEQQQQQ), 416–432 (TPTT…STGS), and 439–453 (SSSS…NSNT). 6 WD repeats span residues 495–534 (SHFD…PTKK), 548–593 (GHTG…IDSY), 610–649 (GHQD…QLYT), 709–748 (NNNS…VVHS), 751–790 (AHSN…CIQD), and 797–827 (KYDE…RILN).

This sequence belongs to the WD repeat striatin family. Part of the core of STRIPAK complexes.

It is found in the cytoplasm. Its subcellular location is the membrane. Its function is as follows. Calmodulin-binding scaffolding protein which is the center of the striatin-interacting phosphatase and kinase (STRIPAK) complexes. STRIPAK complexes have critical roles in protein (de)phosphorylation and are regulators of multiple signaling pathways including Hippo, MAPK, nuclear receptor and cytoskeleton remodeling. Different types of STRIPAK complexes are involved in a variety of biological processes such as cell growth, differentiation, apoptosis, metabolism and immune regulation. The polypeptide is Striatin homolog (strn) (Dictyostelium discoideum (Social amoeba)).